A 418-amino-acid polypeptide reads, in one-letter code: Voltage-gated ClC-type chloride channel ClcB (418 aa).

Transmembrane regions (helical) follow at residues 5–25, 54–74, 146–166, 168–188, 222–242, 258–278, 291–311, 316–336, 352–372, and 380–400; these read LLIA…FRHA, LLTP…WQKF, LWIA…PLAG, LFIA…PVII, ALII…LTLM, WQLA…PAVW, APPL…AVLA, GAPG…GMLY, LLLG…APIM, and MTGE…ASVI.

The protein belongs to the chloride channel (TC 2.A.49) family. ClcB subfamily.

It localises to the cell inner membrane. Its function is as follows. Probably acts as an electrical shunt for an outwardly-directed proton pump that is linked to amino acid decarboxylation, as part of the extreme acid resistance (XAR) response. The sequence is that of Voltage-gated ClC-type chloride channel ClcB from Shigella boydii serotype 18 (strain CDC 3083-94 / BS512).